The sequence spans 212 residues: Thymidylate kinase (212 aa).

ATP is bound at residue 11 to 18; it reads GPEGAGKS.

It belongs to the thymidylate kinase family.

It carries out the reaction dTMP + ATP = dTDP + ADP. Phosphorylation of dTMP to form dTDP in both de novo and salvage pathways of dTTP synthesis. The protein is Thymidylate kinase of Streptococcus sanguinis (strain SK36).